The sequence spans 162 residues: MGLETEKADVQLFMDDDSYSHHSGLEYADPEKFADSDQDRDPHRLNSHLKLGFEDVIAEPVTTHSFDKVWICSHALFEISKYVMYKFLTVFLAIPLAFIAGILFATLSCLHIWILMPFVKTCLMVLPSVQTIWKSVTDVIIAPLCTSVGRCFSSVSLQLSQD.

The Cytoplasmic portion of the chain corresponds to 1-86 (MGLETEKADV…FEISKYVMYK (86 aa)). Tyrosine 19 is subject to Phosphotyrosine; by SRC. 2 positions are modified to phosphoserine: serine 20 and serine 23. Tyrosine 27 carries the post-translational modification Phosphotyrosine; by SRC. Serine 36 carries the phosphoserine modification. The segment at residues 87–107 (FLTVFLAIPLAFIAGILFATL) is an intramembrane region (helical). Topologically, residues 108–162 (SCLHIWILMPFVKTCLMVLPSVQTIWKSVTDVIIAPLCTSVGRCFSSVSLQLSQD) are cytoplasmic.

The protein belongs to the caveolin family. Monomer or homodimer. Interacts with CAV1; the interaction forms a stable heterooligomeric complex that is required for targeting to lipid rafts and for caveolae formation. Tyrosine phosphorylated forms do not form heterooligomers with the Tyr-19-phosphorylated form existing as a monomer or dimer, and the Tyr-27-form as a monomer only. Interacts (tyrosine phosphorylated form) with the SH2 domain-containing proteins, RASA1, NCK1 and SRC. Interacts (tyrosine phosphorylated form) with INSR, the interaction (Tyr-27-phosphorylated form) is increased on insulin stimulation. Interacts (Tyr-19 phosphorylated form) with MAPK1 (phosphorylated form); the interaction, promoted by insulin, leads to nuclear location and MAPK1 activation. Interacts with STAT3; the interaction is increased on insulin-induced tyrosine phosphorylation leading to STAT activation. In terms of processing, phosphorylated on serine and tyrosine residues. CAV1 promotes phosphorylation on Ser-23 which then targets the complex to the plasma membrane, lipid rafts and caveolae. Phosphorylation on Ser-36 appears to modulate mitosis in endothelial cells. Phosphorylation on both Tyr-19 and Tyr-27 is required for insulin-induced 'Ser-727' phosphorylation of STAT3 and its activation. Phosphorylation on Tyr-19 is required for insulin-induced phosphorylation of MAPK1 and DNA binding of STAT3. Tyrosine phosphorylation is induced by both EGF and insulin (By. similarity).

It localises to the nucleus. The protein resides in the cytoplasm. It is found in the golgi apparatus membrane. Its subcellular location is the cell membrane. The protein localises to the membrane. It localises to the caveola. In terms of biological role, may act as a scaffolding protein within caveolar membranes. Interacts directly with G-protein alpha subunits and can functionally regulate their activity. Acts as an accessory protein in conjunction with CAV1 in targeting to lipid rafts and driving caveolae formation. The Ser-36 phosphorylated form has a role in modulating mitosis in endothelial cells. Positive regulator of cellular mitogenesis of the MAPK signaling pathway. Required for the insulin-stimulated nuclear translocation and activation of MAPK1 and STAT3, and the subsequent regulation of cell cycle progression. This is Caveolin-2 (CAV2) from Pan troglodytes (Chimpanzee).